Reading from the N-terminus, the 958-residue chain is MutS protein homolog 4 (958 aa).

Disordered regions lie at residues 51 to 110 and 124 to 161; these read QEAA…SFGN and PVGT…WTPQ. The span at 91–107 shows a compositional bias: low complexity; sequence SSSSSSSPAPASAPGSS. Polar residues-rich tracts occupy residues 124–138 and 146–161; these read PVGT…TTYP and SAGN…WTPQ. Residue 702 to 709 participates in ATP binding; the sequence is GPNMSGKS.

The protein belongs to the DNA mismatch repair MutS family. Heterooligomer of MSH4 and MSH5. Predominantly expressed in testis.

It localises to the chromosome. Involved in meiotic recombination. Required for reciprocal recombination and proper segregation of homologous chromosomes at meiosis. This Mus musculus (Mouse) protein is MutS protein homolog 4 (Msh4).